A 189-amino-acid chain; its full sequence is Large ribosomal subunit protein uL13 (189 aa).

It belongs to the universal ribosomal protein uL13 family.

This Salmo trutta (Brown trout) protein is Large ribosomal subunit protein uL13 (rpl13a).